The following is a 168-amino-acid chain: Ribosome maturation factor RimM (168 aa).

One can recognise a PRC barrel domain in the interval 96–168; it reads EGDYYWTDLI…IIVVEWDADF (73 aa).

It belongs to the RimM family. Binds ribosomal protein uS19.

Its subcellular location is the cytoplasm. Its function is as follows. An accessory protein needed during the final step in the assembly of 30S ribosomal subunit, possibly for assembly of the head region. Essential for efficient processing of 16S rRNA. May be needed both before and after RbfA during the maturation of 16S rRNA. It has affinity for free ribosomal 30S subunits but not for 70S ribosomes. In Coxiella burnetii (strain Dugway 5J108-111), this protein is Ribosome maturation factor RimM.